A 414-amino-acid polypeptide reads, in one-letter code: Succinylornithine transaminase (414 aa).

An N6-(pyridoxal phosphate)lysine modification is found at Lys-260.

Belongs to the class-III pyridoxal-phosphate-dependent aminotransferase family. AstC subfamily. Pyridoxal 5'-phosphate is required as a cofactor.

It catalyses the reaction N(2)-succinyl-L-ornithine + 2-oxoglutarate = N-succinyl-L-glutamate 5-semialdehyde + L-glutamate. It functions in the pathway amino-acid degradation; L-arginine degradation via AST pathway; L-glutamate and succinate from L-arginine: step 3/5. Catalyzes the transamination of N(2)-succinylornithine and alpha-ketoglutarate into N(2)-succinylglutamate semialdehyde and glutamate. Can also act as an acetylornithine aminotransferase. The protein is Succinylornithine transaminase of Yersinia pseudotuberculosis serotype O:1b (strain IP 31758).